A 742-amino-acid polypeptide reads, in one-letter code: MSSAAASATAGSVTGKTPRILACVLCQHRKIKCDRSFPCANCQRANVQCTPSTPAPARKRRRPNQDLQERLARCEELLKEYAPDGKPDIARLTTKRSSLSQSPPKGEEPLPEWNRHGKLIHEDGSVRFVDSYMLSTIYDELRAMRDIIDHDESTPEDESSDYMTPDTNADLLFGGDTPQPAGNSMELQPSPGHIFRLWQVFLDRVNPLIKLVHVPSLQPYFVEATAGAPLPKNIEALLFSIYTLAAVSLSDAECTSILGYGREAALHRFSSGVRASLIRIGFLKTHDLTTLQALVHYLISLQGRYNRHAAWVLNGVVIRIAQKMGIHRDGTMLGLPPFETEMRRRLWFQILSMEFKTALMSGLGHSLLPRVWDTQEPKNVNDADLHPSATEPVKDREGPTEMIFVLITNKVARFIVESPGIEPIFLYHDEKVKKIPGAPSEEKIKEFRGLIDGLSKSLLELTDKYCDPAAGPLHQYTIEFQDIIMQRIRESLEPGDATIETHIDHMFKMAVESFESTVVSYRNSCKVAYLWFLRLQFHNDLFTFLAGQLSQRPSGPLVDRAWETVENILPYHPELLKVNASKENLLLASLLVKGWNMREEYCSTQMGITLNTPPYIEHLRSVVPQDYVKSENSSPSALSRIPKANRMVTREAASDQLSVSGPMDPTFDEFIGNYLDGADWDVFSRINLENPAFPGVPATGITPQVNATASDILPSTRIDHTDPNQTSHQFAMYGIDPQSAWQ.

The segment at residues 23 to 49 (CVLCQHRKIKCDRSFPCANCQRANVQC) is a DNA-binding region (zn(2)-C6 fungal-type). The interval 85-116 (GKPDIARLTTKRSSLSQSPPKGEEPLPEWNRH) is disordered. The segment covering 105 to 116 (KGEEPLPEWNRH) has biased composition (basic and acidic residues).

It localises to the nucleus. In terms of biological role, transcriptional regulator; part of the gene cluster that mediates the biosynthesis of pyriculol and pyriculariol, two heptaketides that induce lesion formation upon application on rice leaves but are dispensable for pathogenicity. With TRF2, negatively regulates the expression of the gene cluster and the subsequent pyriculol and pyriculariol production. The polypeptide is Pyriculol/pyriculariol biosynthesis cluster transcription factor 1 (Pyricularia oryzae (strain 70-15 / ATCC MYA-4617 / FGSC 8958) (Rice blast fungus)).